A 438-amino-acid polypeptide reads, in one-letter code: Exosome complex component RRP45 (438 aa).

Ser65 bears the Phosphoserine mark. At Lys297 the chain carries N6-acetyllysine; alternate. Lys297 is covalently cross-linked (Glycyl lysine isopeptide (Lys-Gly) (interchain with G-Cter in SUMO1); alternate). Lys297 participates in a covalent cross-link: Glycyl lysine isopeptide (Lys-Gly) (interchain with G-Cter in SUMO2); alternate. 2 positions are modified to phosphoserine: Ser306 and Ser346. Disordered regions lie at residues 337-365 (AQIGDGIENSWGDLEDSEKEEEEEEGGID) and 377-438 (TGEV…RTAN). Acidic residues predominate over residues 349-364 (DLEDSEKEEEEEEGGI). 2 positions are modified to phosphoserine: Ser393 and Ser395. Basic residues predominate over residues 427–438 (QGKRKKKKRTAN).

Belongs to the RNase PH family. As to quaternary structure, component of the RNA exosome core complex (Exo-9), composed of EXOSC1, EXOSC2, EXOSC3, EXOSC4, EXOSC5, EXOSC6, EXOSC7, EXOSC8 and EXOSC9; within the complex interacts with EXOSC3, EXOSC4, EXOSC5 and DIS3. The catalytically inactive RNA exosome core complex (Exo-9) associates with the catalytic subunit EXOSC10/RRP6. Exo-9 may associate with DIS3 to form the nucleolar exosome complex, or DIS3L to form the cytoplasmic exosome complex. Exo-9 is formed by a hexameric base ring consisting of the heterodimers EXOSC4-EXOSC9, EXOSC5-EXOSC8 and EXOSC6-EXOSC7, and a cap ring consisting of EXOSC1, EXOSC2 and EXOSC3. The RNA exosome complex associates with cofactors C1D/RRP47, MPHOSPH6/MPP6 and MTREX/MTR4. Interacts (via C-terminus region) with SETX (via N-terminus domain); the interaction enhances SETX sumoylation. Interacts with DIS3; the interaction is direct.

The protein resides in the cytoplasm. It localises to the nucleus. It is found in the nucleolus. The protein localises to the nucleoplasm. Non-catalytic component of the RNA exosome complex which has 3'-&gt;5' exoribonuclease activity and participates in a multitude of cellular RNA processing and degradation events. In the nucleus, the RNA exosome complex is involved in proper maturation of stable RNA species such as rRNA, snRNA and snoRNA, in the elimination of RNA processing by-products and non-coding 'pervasive' transcripts, such as antisense RNA species and promoter-upstream transcripts (PROMPTs), and of mRNAs with processing defects, thereby limiting or excluding their export to the cytoplasm. The RNA exosome may be involved in Ig class switch recombination (CSR) and/or Ig variable region somatic hypermutation (SHM) by targeting AICDA deamination activity to transcribed dsDNA substrates. In the cytoplasm, the RNA exosome complex is involved in general mRNA turnover and specifically degrades inherently unstable mRNAs containing AU-rich elements (AREs) within their 3' untranslated regions, and in RNA surveillance pathways, preventing translation of aberrant mRNAs. It seems to be involved in degradation of histone mRNA. The catalytic inactive RNA exosome core complex of 9 subunits (Exo-9) is proposed to play a pivotal role in the binding and presentation of RNA for ribonucleolysis, and to serve as a scaffold for the association with catalytic subunits and accessory proteins or complexes. EXOSC9 binds to ARE-containing RNAs. In Mus musculus (Mouse), this protein is Exosome complex component RRP45 (Exosc9).